Reading from the N-terminus, the 236-residue chain is B-cell antigen receptor complex-associated protein alpha chain (236 aa).

Positions 1 to 32 are cleaved as a signal peptide; that stretch reads MPGGPGLLQALCATTFLLFLISAGGLGPGSQA. The Ig-like C2-type domain occupies 33 to 122; sequence LWVDGGPPSM…EKDLNQKILS (90 aa). The Extracellular segment spans residues 33–151; sequence LWVDGGPPSM…LDMGEGTKNN (119 aa). C54 and C109 are disulfide-bonded. N66 and N76 each carry an N-linked (GlcNAc...) asparagine glycan. Residues 152–172 traverse the membrane as a helical segment; it reads IITAEGIILLFCAVVPGTLLL. Over 173 to 236 the chain is Cytoplasmic; that stretch reads FRKRWQNMKF…GDGDVQLEKP (64 aa). An ITAM domain is found at 185–213; sequence DAQDDYEDENLYEGLNLDDCSMYEDISRG. Y196 is subject to Phosphotyrosine; by SRC-type Tyr-kinases. Residue Y207 is modified to Phosphotyrosine. Residue R212 is modified to Asymmetric dimethylarginine; by PRMT1. Y218 carries the phosphotyrosine; by Tyr-kinases modification.

In terms of assembly, heterodimer of alpha and beta chains; disulfide-linked. Part of the B-cell antigen receptor complex where the alpha/beta chain heterodimer is non-covalently associated with an antigen-specific membrane-bound surface immunoglobulin of two heavy chains and two light chains. Interacts through its phosphorylated ITAM domain with the SH2 domains of SYK which stimulates SYK autophosphorylation and activation. Also interacts, when phosphorylated on Tyr-207, with the SH2 domain of BLNK/SLP65, bringing BLNK into proximity with SYK and allowing SYK to phosphorylate BLNK which is necessary for trafficking of the BCR to late endosomes. Interacts with Src-family tyrosine kinases including FYN and LYN, increasing their activity. Phosphorylated on tyrosine, serine and threonine residues upon B-cell activation. Phosphorylation of tyrosine residues by Src-family kinases, including LYN, is an early and essential feature of the BCR signaling cascade. The phosphorylated tyrosines serve as docking sites for SH2-domain containing kinases, leading to their activation which in turn leads to phosphorylation of downstream targets. Phosphorylation of serine and threonine residues may prevent subsequent tyrosine phosphorylation. Post-translationally, arginine methylation in the ITAM domain may interfere with the binding of SYK. It promotes signals leading to B-cell differentiation.

Its subcellular location is the cell membrane. Its function is as follows. Required in cooperation with CD79B for initiation of the signal transduction cascade activated by binding of antigen to the B-cell antigen receptor complex (BCR) which leads to internalization of the complex, trafficking to late endosomes and antigen presentation. Also required for BCR surface expression and for efficient differentiation of pro- and pre-B-cells. Stimulates SYK autophosphorylation and activation. Binds to BLNK, bringing BLNK into proximity with SYK and allowing SYK to phosphorylate BLNK. Also interacts with and increases activity of some Src-family tyrosine kinases. Represses BCR signaling during development of immature B-cells. The chain is B-cell antigen receptor complex-associated protein alpha chain (CD79A) from Canis lupus familiaris (Dog).